A 400-amino-acid polypeptide reads, in one-letter code: Ribosomal RNA large subunit methyltransferase I (400 aa).

The PUA domain occupies 6 to 84 (FPRLVLAKGR…NEAIDSAFFE (79 aa)).

The protein belongs to the methyltransferase superfamily. RlmI family.

Its subcellular location is the cytoplasm. The enzyme catalyses cytidine(1962) in 23S rRNA + S-adenosyl-L-methionine = 5-methylcytidine(1962) in 23S rRNA + S-adenosyl-L-homocysteine + H(+). Its function is as follows. Specifically methylates the cytosine at position 1962 (m5C1962) of 23S rRNA. This Klebsiella pneumoniae subsp. pneumoniae (strain ATCC 700721 / MGH 78578) protein is Ribosomal RNA large subunit methyltransferase I.